The following is a 323-amino-acid chain: tRNA U34 carboxymethyltransferase (323 aa).

Residues Lys-91, Trp-105, Lys-110, Gly-130, 152–154, 181–182, Met-196, Tyr-200, and Arg-315 contribute to the carboxy-S-adenosyl-L-methionine site; these read DPT and IE.

Belongs to the class I-like SAM-binding methyltransferase superfamily. CmoB family. Homotetramer.

The enzyme catalyses carboxy-S-adenosyl-L-methionine + 5-hydroxyuridine(34) in tRNA = 5-carboxymethoxyuridine(34) in tRNA + S-adenosyl-L-homocysteine + H(+). Catalyzes carboxymethyl transfer from carboxy-S-adenosyl-L-methionine (Cx-SAM) to 5-hydroxyuridine (ho5U) to form 5-carboxymethoxyuridine (cmo5U) at position 34 in tRNAs. The polypeptide is tRNA U34 carboxymethyltransferase (Photorhabdus laumondii subsp. laumondii (strain DSM 15139 / CIP 105565 / TT01) (Photorhabdus luminescens subsp. laumondii)).